The primary structure comprises 103 residues: MYAVLQSGGKQHRVSEGQTVRLEKLDIATGETVEFDQVMMIANGDDIQIGGPFVTGGKITAEVVAHGRGDKVMIVKFRRRKYFRKHQGHRQWFTDVKITGIGA.

Belongs to the bacterial ribosomal protein bL21 family. Part of the 50S ribosomal subunit. Contacts protein L20.

In terms of biological role, this protein binds to 23S rRNA in the presence of protein L20. This Sodalis glossinidius (strain morsitans) protein is Large ribosomal subunit protein bL21.